The following is a 226-amino-acid chain: Urease accessory protein UreF (226 aa).

It belongs to the UreF family. UreD, UreF and UreG form a complex that acts as a GTP-hydrolysis-dependent molecular chaperone, activating the urease apoprotein by helping to assemble the nickel containing metallocenter of UreC. The UreE protein probably delivers the nickel.

It localises to the cytoplasm. Its function is as follows. Required for maturation of urease via the functional incorporation of the urease nickel metallocenter. The chain is Urease accessory protein UreF from Janthinobacterium sp. (strain Marseille) (Minibacterium massiliensis).